A 301-amino-acid chain; its full sequence is GTPase Era (301 aa).

In terms of domain architecture, Era-type G spans 6-173 (KSGFVAIVGR…LEQTNANLEI (168 aa)). The segment at 14–21 (GRPNVGKS) is G1. GTP is bound at residue 14–21 (GRPNVGKS). Positions 40–44 (QTTRN) are G2. The G3 stretch occupies residues 61–64 (DTPG). Residues 61 to 65 (DTPGI) and 123 to 126 (NKID) contribute to the GTP site. Residues 123–126 (NKID) are G4. A G5 region spans residues 152–154 (ISA). A KH type-2 domain is found at 204 to 282 (TREEVPHSVA…FLEIWVKVQK (79 aa)).

Belongs to the TRAFAC class TrmE-Era-EngA-EngB-Septin-like GTPase superfamily. Era GTPase family. In terms of assembly, monomer.

The protein resides in the cytoplasm. The protein localises to the cell membrane. In terms of biological role, an essential GTPase that binds both GDP and GTP, with rapid nucleotide exchange. Plays a role in 16S rRNA processing and 30S ribosomal subunit biogenesis and possibly also in cell cycle regulation and energy metabolism. The sequence is that of GTPase Era from Listeria monocytogenes serotype 4b (strain F2365).